The following is a 245-amino-acid chain: 1-(5-phosphoribosyl)-5-[(5-phosphoribosylamino)methylideneamino] imidazole-4-carboxamide isomerase (245 aa).

The active-site Proton acceptor is the aspartate 8. Aspartate 130 functions as the Proton donor in the catalytic mechanism.

Belongs to the HisA/HisF family.

The protein resides in the cytoplasm. It carries out the reaction 1-(5-phospho-beta-D-ribosyl)-5-[(5-phospho-beta-D-ribosylamino)methylideneamino]imidazole-4-carboxamide = 5-[(5-phospho-1-deoxy-D-ribulos-1-ylimino)methylamino]-1-(5-phospho-beta-D-ribosyl)imidazole-4-carboxamide. The protein operates within amino-acid biosynthesis; L-histidine biosynthesis; L-histidine from 5-phospho-alpha-D-ribose 1-diphosphate: step 4/9. The sequence is that of 1-(5-phosphoribosyl)-5-[(5-phosphoribosylamino)methylideneamino] imidazole-4-carboxamide isomerase from Pseudomonas fluorescens (strain Pf0-1).